The chain runs to 205 residues: FMN-dependent NADH:quinone oxidoreductase (205 aa).

Residues serine 10 and 16 to 18 (SVS) each bind FMN.

This sequence belongs to the azoreductase type 1 family. As to quaternary structure, homodimer. FMN serves as cofactor.

The enzyme catalyses 2 a quinone + NADH + H(+) = 2 a 1,4-benzosemiquinone + NAD(+). The catalysed reaction is N,N-dimethyl-1,4-phenylenediamine + anthranilate + 2 NAD(+) = 2-(4-dimethylaminophenyl)diazenylbenzoate + 2 NADH + 2 H(+). Its function is as follows. Quinone reductase that provides resistance to thiol-specific stress caused by electrophilic quinones. In terms of biological role, also exhibits azoreductase activity. Catalyzes the reductive cleavage of the azo bond in aromatic azo compounds to the corresponding amines. In Agrobacterium fabrum (strain C58 / ATCC 33970) (Agrobacterium tumefaciens (strain C58)), this protein is FMN-dependent NADH:quinone oxidoreductase.